Here is a 245-residue protein sequence, read N- to C-terminus: Membrane-spanning 4-domains subfamily A member 15 (245 aa).

The interval M1–A30 is disordered. The next 4 membrane-spanning stretches (helical) occupy residues G78–V98, L103–S123, I147–T167, and L176–F196.

It belongs to the MS4A family.

The protein resides in the membrane. In terms of biological role, may be involved in signal transduction as a component of a multimeric receptor complex. The polypeptide is Membrane-spanning 4-domains subfamily A member 15 (Ms4a15) (Mus musculus (Mouse)).